The chain runs to 337 residues: Anthranilate phosphoribosyltransferase (337 aa).

5-phospho-alpha-D-ribose 1-diphosphate contacts are provided by residues G81, 84–85 (GD), S89, 91–94 (NVST), 109–117 (KHGNRAASS), and A121. Position 81 (G81) interacts with anthranilate. S93 lines the Mg(2+) pocket. Residue N112 coordinates anthranilate. Residue R167 coordinates anthranilate. Mg(2+) is bound by residues D226 and E227.

It belongs to the anthranilate phosphoribosyltransferase family. In terms of assembly, homodimer. Mg(2+) is required as a cofactor.

It catalyses the reaction N-(5-phospho-beta-D-ribosyl)anthranilate + diphosphate = 5-phospho-alpha-D-ribose 1-diphosphate + anthranilate. It functions in the pathway amino-acid biosynthesis; L-tryptophan biosynthesis; L-tryptophan from chorismate: step 2/5. Catalyzes the transfer of the phosphoribosyl group of 5-phosphorylribose-1-pyrophosphate (PRPP) to anthranilate to yield N-(5'-phosphoribosyl)-anthranilate (PRA). This is Anthranilate phosphoribosyltransferase from Methylobacterium sp. (strain 4-46).